The chain runs to 408 residues: Acetate kinase (408 aa).

Position 7 (N7) interacts with Mg(2+). K14 contacts ATP. Residue R91 coordinates substrate. The Proton donor/acceptor role is filled by D148. Residues 208-212 (HLGNG), 283-285 (DFR), and 331-335 (GIGEN) each bind ATP. Residue E384 coordinates Mg(2+).

This sequence belongs to the acetokinase family. Homodimer. The cofactor is Mg(2+). Mn(2+) is required as a cofactor.

It localises to the cytoplasm. The enzyme catalyses acetate + ATP = acetyl phosphate + ADP. It participates in metabolic intermediate biosynthesis; acetyl-CoA biosynthesis; acetyl-CoA from acetate: step 1/2. In terms of biological role, catalyzes the formation of acetyl phosphate from acetate and ATP. Can also catalyze the reverse reaction. This Methanosarcina mazei (Methanosarcina frisia) protein is Acetate kinase.